We begin with the raw amino-acid sequence, 507 residues long: Cobyric acid synthase (507 aa).

The 196-residue stretch at 273 to 468 (RPVIAVIAYP…LHGMFEDPAV (196 aa)) folds into the GATase cobBQ-type domain. The active-site Nucleophile is cysteine 354. Residue histidine 460 is part of the active site.

The protein belongs to the CobB/CobQ family. CobQ subfamily.

Its pathway is cofactor biosynthesis; adenosylcobalamin biosynthesis. Its function is as follows. Catalyzes amidations at positions B, D, E, and G on adenosylcobyrinic A,C-diamide. NH(2) groups are provided by glutamine, and one molecule of ATP is hydrogenolyzed for each amidation. In Polaromonas sp. (strain JS666 / ATCC BAA-500), this protein is Cobyric acid synthase.